Consider the following 437-residue polypeptide: UDP-N-acetylmuramate--L-alanine ligase (437 aa).

108–114 (GAHGKTS) contacts ATP.

This sequence belongs to the MurCDEF family.

The protein resides in the cytoplasm. It carries out the reaction UDP-N-acetyl-alpha-D-muramate + L-alanine + ATP = UDP-N-acetyl-alpha-D-muramoyl-L-alanine + ADP + phosphate + H(+). Its pathway is cell wall biogenesis; peptidoglycan biosynthesis. Cell wall formation. The sequence is that of UDP-N-acetylmuramate--L-alanine ligase from Staphylococcus haemolyticus (strain JCSC1435).